The sequence spans 124 residues: UPF0292 protein AF_0905 (124 aa).

One can recognise a Toprim domain in the interval 21–98; the sequence is GWVVVVEGKK…IPDVEIKRKI (78 aa). Mg(2+) contacts are provided by Glu-27, Asp-67, and Asp-69.

This sequence belongs to the UPF0292 family. It depends on Mg(2+) as a cofactor.

This Archaeoglobus fulgidus (strain ATCC 49558 / DSM 4304 / JCM 9628 / NBRC 100126 / VC-16) protein is UPF0292 protein AF_0905.